The sequence spans 256 residues: Thiazole synthase (256 aa).

K96 functions as the Schiff-base intermediate with DXP in the catalytic mechanism. 1-deoxy-D-xylulose 5-phosphate-binding positions include G157, 183–184, and 205–206; these read AG and NT.

Belongs to the ThiG family. As to quaternary structure, homotetramer. Forms heterodimers with either ThiH or ThiS.

The protein localises to the cytoplasm. It carries out the reaction [ThiS sulfur-carrier protein]-C-terminal-Gly-aminoethanethioate + 2-iminoacetate + 1-deoxy-D-xylulose 5-phosphate = [ThiS sulfur-carrier protein]-C-terminal Gly-Gly + 2-[(2R,5Z)-2-carboxy-4-methylthiazol-5(2H)-ylidene]ethyl phosphate + 2 H2O + H(+). The protein operates within cofactor biosynthesis; thiamine diphosphate biosynthesis. Its function is as follows. Catalyzes the rearrangement of 1-deoxy-D-xylulose 5-phosphate (DXP) to produce the thiazole phosphate moiety of thiamine. Sulfur is provided by the thiocarboxylate moiety of the carrier protein ThiS. In vitro, sulfur can be provided by H(2)S. This is Thiazole synthase from Bacillus cereus (strain G9842).